Reading from the N-terminus, the 254-residue chain is 5-oxoprolinase subunit A (254 aa).

Belongs to the LamB/PxpA family. In terms of assembly, forms a complex composed of PxpA, PxpB and PxpC.

It carries out the reaction 5-oxo-L-proline + ATP + 2 H2O = L-glutamate + ADP + phosphate + H(+). In terms of biological role, catalyzes the cleavage of 5-oxoproline to form L-glutamate coupled to the hydrolysis of ATP to ADP and inorganic phosphate. The sequence is that of 5-oxoprolinase subunit A from Acinetobacter baumannii (strain ATCC 17978 / DSM 105126 / CIP 53.77 / LMG 1025 / NCDC KC755 / 5377).